The following is a 316-amino-acid chain: Probable porphobilinogen deaminase (316 aa).

The residue at position 234 (C234) is an S-(dipyrrolylmethanemethyl)cysteine.

Belongs to the HMBS family. The cofactor is dipyrromethane.

The catalysed reaction is 4 porphobilinogen + H2O = hydroxymethylbilane + 4 NH4(+). It functions in the pathway porphyrin-containing compound metabolism; protoporphyrin-IX biosynthesis; coproporphyrinogen-III from 5-aminolevulinate: step 2/4. Tetrapolymerization of the monopyrrole PBG into the hydroxymethylbilane pre-uroporphyrinogen in several discrete steps. The chain is Probable porphobilinogen deaminase from Methanosarcina mazei (strain ATCC BAA-159 / DSM 3647 / Goe1 / Go1 / JCM 11833 / OCM 88) (Methanosarcina frisia).